The chain runs to 662 residues: Acetyl-coenzyme A synthetase (662 aa).

CoA-binding positions include 197 to 200 (RKGK) and threonine 317. Residues 393 to 395 (GEP), 417 to 422 (DTWWQT), aspartate 510, and arginine 525 each bind ATP. Position 533 (serine 533) interacts with CoA. ATP is bound at residue arginine 536. Mg(2+) contacts are provided by histidine 549 and valine 552. Position 623 is an N6-acetyllysine (lysine 623).

The protein belongs to the ATP-dependent AMP-binding enzyme family. Mg(2+) is required as a cofactor. In terms of processing, acetylated. Deacetylation by the SIR2-homolog deacetylase activates the enzyme.

It carries out the reaction acetate + ATP + CoA = acetyl-CoA + AMP + diphosphate. In terms of biological role, catalyzes the conversion of acetate into acetyl-CoA (AcCoA), an essential intermediate at the junction of anabolic and catabolic pathways. AcsA undergoes a two-step reaction. In the first half reaction, AcsA combines acetate with ATP to form acetyl-adenylate (AcAMP) intermediate. In the second half reaction, it can then transfer the acetyl group from AcAMP to the sulfhydryl group of CoA, forming the product AcCoA. This Helicobacter pylori (strain G27) protein is Acetyl-coenzyme A synthetase.